The primary structure comprises 460 residues: Kynurenine 3-monooxygenase (460 aa).

It belongs to the aromatic-ring hydroxylase family. KMO subfamily. The cofactor is FAD.

The protein resides in the mitochondrion. It catalyses the reaction L-kynurenine + NADPH + O2 + H(+) = 3-hydroxy-L-kynurenine + NADP(+) + H2O. The protein operates within cofactor biosynthesis; NAD(+) biosynthesis; quinolinate from L-kynurenine: step 1/3. In terms of biological role, catalyzes the hydroxylation of L-kynurenine (L-Kyn) to form 3-hydroxy-L-kynurenine (L-3OHKyn). Required for synthesis of quinolinic acid. The sequence is that of Kynurenine 3-monooxygenase from Dictyostelium discoideum (Social amoeba).